We begin with the raw amino-acid sequence, 409 residues long: Elongation factor 1-gamma (409 aa).

Residues 2–81 enclose the GST N-terminal domain; sequence SVGTVYGKIG…YLASLNKTRA (80 aa). A GST C-terminal domain is found at 86 to 212; that stretch reads TAEEKAKVLQ…EPLKFIDQPL (127 aa). Positions 219-248 are enriched in basic and acidic residues; sequence NKEAAPAKKAEKKKDEKKKNAPKPQAERPA. A disordered region spans residues 219 to 261; sequence NKEAAPAKKAEKKKDEKKKNAPKPQAERPAKPPKHPLASAPNG. The EF-1-gamma C-terminal domain maps to 251–409; it reads PKHPLASAPN…REVADGKVCK (159 aa).

As to quaternary structure, EF-1 is composed of four subunits: alpha, beta, delta, and gamma.

Probably plays a role in anchoring the complex to other cellular components. This Schizosaccharomyces pombe (strain 972 / ATCC 24843) (Fission yeast) protein is Elongation factor 1-gamma (tef3).